The following is a 145-amino-acid chain: Synaptojanin-2-binding protein (145 aa).

The Cytoplasmic segment spans residues 1–117 (MNGRVDYLVS…VHRGDGEPSG (117 aa)). A PDZ domain is found at 13 to 100 (EINLTRGPSG…AVSLRVQHRL (88 aa)). A helical membrane pass occupies residues 118-138 (VPVAVVLLPVFALTLVAVWAF). The Mitochondrial intermembrane portion of the chain corresponds to 139 to 145 (VRYRKQL).

Binds (via the PDZ domain) to isoform 2A of SYNJ2 (via the unique motif in the C-terminus). Interacts (via C-terminus) with RALBP1. Interacts (via PDZ domain) with ACVR2A (via C-terminus) and ACVR2B (via C-terminus). Forms a ternary complex with ACVR2A and RALBP1. Interacts with MAPK12. Interacts with DLL1; enhances DLL1 protein stability, and promotes notch signaling in endothelial cells. Widely expressed.

It localises to the mitochondrion outer membrane. Its function is as follows. Regulates endocytosis of activin type 2 receptor kinases through the Ral/RALBP1-dependent pathway and may be involved in suppression of activin-induced signal transduction. The chain is Synaptojanin-2-binding protein (Synj2bp) from Rattus norvegicus (Rat).